A 389-amino-acid polypeptide reads, in one-letter code: Galactokinase (389 aa).

34 to 37 (EHTD) is a binding site for substrate. ATP-binding positions include Ser-68 and 125 to 131 (GSGLSSS). Residues Ser-131 and Glu-163 each contribute to the Mg(2+) site. The Proton acceptor role is filled by Asp-175. Tyr-225 is a binding site for substrate.

This sequence belongs to the GHMP kinase family. GalK subfamily.

Its subcellular location is the cytoplasm. It carries out the reaction alpha-D-galactose + ATP = alpha-D-galactose 1-phosphate + ADP + H(+). It participates in carbohydrate metabolism; galactose metabolism. Functionally, catalyzes the transfer of the gamma-phosphate of ATP to D-galactose to form alpha-D-galactose-1-phosphate (Gal-1-P). The polypeptide is Galactokinase (Clostridium acetobutylicum (strain ATCC 824 / DSM 792 / JCM 1419 / IAM 19013 / LMG 5710 / NBRC 13948 / NRRL B-527 / VKM B-1787 / 2291 / W)).